A 628-amino-acid polypeptide reads, in one-letter code: MSKQEKTINLSESAQVDQQSVQPFPRSRKIYVEGSRPDIRVPMREISLHDTPTDFGGEANAPVLVYDTSGPYTDPDVIIDVRKGLADVRSAWIDARGDTERLGGLSSNFGQQRLNDAELAKLRFNHVRNPRRAKAGANVSQMHYARQGIITAEMEYVAIRENMKLQEARAAGLLKQQHAGHSFGANIPKEITAEFVREEIARGRAIIPANINHTELEPMIIGRNFLVKINGNIGNSALGSSIEEEVAKLTWGIRWGSDTVMDLSTGKHIHETREWIIRNSPVPIGTVPIYQALEKVGGVAEDLTWELFRDTLIEQAEQGVDYFTIHAGVLLRYVPLTAKRVTGIVSRGGSIMAKWCLAHHQENFLYTHFDEICEIMKAYDVSFSLGDGLRPGSIADANDAAQFGELETLGELTKIAWKHDVQCMIEGPGHVPMQLIKENMDKQLECCDEAPFYTLGPLTTDIAPGYDHITSGIGAAMIGWFGCAMLCYVTPKEHLGLPNKDDVKTGIITYKIAAHAADLAKGHPGAQIRDNALSKARFEFRWEDQFNLGLDPDTARAFHDETLPKESAKVAHFCSMCGPKFCSMKITQEVREYAANLRIDAVDVSVEEGMREQAERFRQEGSQLYHKV.

A disordered region spans residues 1-22 (MSKQEKTINLSESAQVDQQSVQ). A compositionally biased stretch (polar residues) spans 7 to 22 (TINLSESAQVDQQSVQ). Residues Asn232, Met261, Tyr290, His326, 346–348 (SRG), 387–390 (DGLR), and Glu426 each bind substrate. His430 contacts Zn(2+). Tyr453 contributes to the substrate binding site. His494 lines the Zn(2+) pocket. Cys574, Cys577, and Cys582 together coordinate [4Fe-4S] cluster.

This sequence belongs to the ThiC family. As to quaternary structure, homodimer. [4Fe-4S] cluster is required as a cofactor.

It catalyses the reaction 5-amino-1-(5-phospho-beta-D-ribosyl)imidazole + S-adenosyl-L-methionine = 4-amino-2-methyl-5-(phosphooxymethyl)pyrimidine + CO + 5'-deoxyadenosine + formate + L-methionine + 3 H(+). The protein operates within cofactor biosynthesis; thiamine diphosphate biosynthesis. Functionally, catalyzes the synthesis of the hydroxymethylpyrimidine phosphate (HMP-P) moiety of thiamine from aminoimidazole ribotide (AIR) in a radical S-adenosyl-L-methionine (SAM)-dependent reaction. The sequence is that of Phosphomethylpyrimidine synthase from Pseudomonas putida (strain W619).